The sequence spans 610 residues: UvrABC system protein C (610 aa).

Residues 16–94 enclose the GIY-YIG domain; sequence SQPGVYRMYD…IKLYQPRYNV (79 aa). A UVR domain is found at 204-239; the sequence is QQVLTRLIERMEQASQQLKFEDAARYRDQIQAVRQV.

Belongs to the UvrC family. Interacts with UvrB in an incision complex.

The protein resides in the cytoplasm. In terms of biological role, the UvrABC repair system catalyzes the recognition and processing of DNA lesions. UvrC both incises the 5' and 3' sides of the lesion. The N-terminal half is responsible for the 3' incision and the C-terminal half is responsible for the 5' incision. This chain is UvrABC system protein C, found in Photorhabdus laumondii subsp. laumondii (strain DSM 15139 / CIP 105565 / TT01) (Photorhabdus luminescens subsp. laumondii).